Consider the following 207-residue polypeptide: 3-isopropylmalate dehydratase small subunit (207 aa).

The protein belongs to the LeuD family. LeuD type 1 subfamily. As to quaternary structure, heterodimer of LeuC and LeuD.

It catalyses the reaction (2R,3S)-3-isopropylmalate = (2S)-2-isopropylmalate. Its pathway is amino-acid biosynthesis; L-leucine biosynthesis; L-leucine from 3-methyl-2-oxobutanoate: step 2/4. Catalyzes the isomerization between 2-isopropylmalate and 3-isopropylmalate, via the formation of 2-isopropylmaleate. The protein is 3-isopropylmalate dehydratase small subunit of Rhodospirillum rubrum (strain ATCC 11170 / ATH 1.1.1 / DSM 467 / LMG 4362 / NCIMB 8255 / S1).